Here is a 394-residue protein sequence, read N- to C-terminus: uncharacterized protein (394 aa).

Residues 7-51 form the F-box domain; that stretch reads RKVIPNMPDLILRKIFDQYDYPVLCKMERVCRRWTNIINSKFRKE.

This is an uncharacterized protein from Caenorhabditis elegans.